The primary structure comprises 296 residues: Ribosomal RNA small subunit methyltransferase A (296 aa).

S-adenosyl-L-methionine is bound by residues Asn-30, Leu-32, Gly-57, Glu-78, Asp-103, and Asn-128.

Belongs to the class I-like SAM-binding methyltransferase superfamily. rRNA adenine N(6)-methyltransferase family. RsmA subfamily.

The protein localises to the cytoplasm. It carries out the reaction adenosine(1518)/adenosine(1519) in 16S rRNA + 4 S-adenosyl-L-methionine = N(6)-dimethyladenosine(1518)/N(6)-dimethyladenosine(1519) in 16S rRNA + 4 S-adenosyl-L-homocysteine + 4 H(+). Its function is as follows. Specifically dimethylates two adjacent adenosines (A1518 and A1519) in the loop of a conserved hairpin near the 3'-end of 16S rRNA in the 30S particle. May play a critical role in biogenesis of 30S subunits. In Macrococcus caseolyticus (strain JCSC5402) (Macrococcoides caseolyticum), this protein is Ribosomal RNA small subunit methyltransferase A.